The chain runs to 905 residues: MSIEPDISPSPDTPAPIEAKVSPMMEQYHEIKAANPGLLLFYRMGDFYELFFEDAEIAARALGITLTKRGKHKGQDIPMCGVPVERSDDYLHRLIALGHRVAVCEQTEDPAAARARKSVVRRDVVRLITPGTLTEDTLLDARANNYLLAIARARASAGADRIGLAWIDISTAEFIVTECAPAELAATLARINPNEAIVTDALYSDPELGPLLRELPAVTPLTRDVFDSATAERRLCDYFAVATMDGLSAMSRLEATAAAACVTYIDRTQLGKKPPLSPPSREATGSTMAIDPATRANLELTRTLSGERRGSLLDAIDCTVTAAGSRLLAQRLAAPLTDVEQIAQRLDAVAALLPDPGLREALRATLRAAPDMSRALARLSVGRGGPRDLAALRDGLLAADQALAQLGALEVPPKEIQTAMAALRRPSRDLAQEFSRALADDLPLMKRDGGFVREGYHDALDETRKLRDDSRLIVAAMQARYADDCGVKGLKIRHNNVLGYFVEVTAQHGDKLMAPPLNLTFIHRQTLAGQTRFTTAELGEIEAKIANAGDRALGLELEIFERLVALVQAATDDLRAAAHGFAALDVTLALAKLAVDDNYVRPEVDGSLSFAIEGGRHPVVEQALRRDGQPFIANACDLSPGPGQQSGQIWLITGPNMAGKSTFLRQNALIALLAQIGSFVPASRARIGIVDRLFSRVGAADDLARGRSTFMVEMVETAVILNQASERALVILDEIGRGTATFDGLSIAWAAIEHLHESNRCRSLFATHYHELTALSAKLPRLFNATVRVKEWHGDVVFLHEVLPGSADRSYGIQVAKLAGLPPSVITRAKSVLAKLEAQDRGQSARALAEDLPLFAVTARAAAEPSPPSEAERLIEALKALHPDELSPREALDALYALKAKLGKA.

Positions 272 to 292 are disordered; it reads KKPPLSPPSREATGSTMAIDP. 654-661 is a binding site for ATP; that stretch reads GPNMAGKS.

It belongs to the DNA mismatch repair MutS family.

Functionally, this protein is involved in the repair of mismatches in DNA. It is possible that it carries out the mismatch recognition step. This protein has a weak ATPase activity. The sequence is that of DNA mismatch repair protein MutS from Rhodopseudomonas palustris (strain BisB18).